The sequence spans 117 residues: Large ribosomal subunit protein uL24 (117 aa).

It belongs to the universal ribosomal protein uL24 family. In terms of assembly, part of the 50S ribosomal subunit.

In terms of biological role, one of two assembly initiator proteins, it binds directly to the 5'-end of the 23S rRNA, where it nucleates assembly of the 50S subunit. One of the proteins that surrounds the polypeptide exit tunnel on the outside of the subunit. The protein is Large ribosomal subunit protein uL24 of Trichormus variabilis (strain ATCC 29413 / PCC 7937) (Anabaena variabilis).